A 126-amino-acid polypeptide reads, in one-letter code: Ejaculatory bulb-specific protein 3 (126 aa).

The N-terminal stretch at 1–17 (MKMILALVVLGLVLVAA) is a signal peptide.

It belongs to the insect A10/OS-D protein family. In terms of tissue distribution, specifically expressed in the ejaculatory bulb and seminal fluid.

It localises to the secreted. Functionally, protein component of the posterior mating plug. This Drosophila melanogaster (Fruit fly) protein is Ejaculatory bulb-specific protein 3.